The chain runs to 545 residues: Glucose-6-phosphate isomerase (545 aa).

Catalysis depends on Glu351, which acts as the Proton donor. Catalysis depends on residues His382 and Lys510.

Belongs to the GPI family.

The protein resides in the cytoplasm. The catalysed reaction is alpha-D-glucose 6-phosphate = beta-D-fructose 6-phosphate. It functions in the pathway carbohydrate biosynthesis; gluconeogenesis. Its pathway is carbohydrate degradation; glycolysis; D-glyceraldehyde 3-phosphate and glycerone phosphate from D-glucose: step 2/4. Its function is as follows. Catalyzes the reversible isomerization of glucose-6-phosphate to fructose-6-phosphate. This Shewanella sp. (strain MR-7) protein is Glucose-6-phosphate isomerase.